The chain runs to 668 residues: DNA ligase (668 aa).

NAD(+) is bound by residues 32–36 (DVEYD), 81–82 (SL), and Glu-111. Residue Lys-113 is the N6-AMP-lysine intermediate of the active site. Arg-134, Glu-171, Lys-290, and Lys-314 together coordinate NAD(+). Residues Cys-408, Cys-411, Cys-426, and Cys-432 each contribute to the Zn(2+) site. A BRCT domain is found at 591–668 (EEDLSLKGQT…DEEALIAILS (78 aa)).

Belongs to the NAD-dependent DNA ligase family. LigA subfamily. It depends on Mg(2+) as a cofactor. Mn(2+) is required as a cofactor.

The enzyme catalyses NAD(+) + (deoxyribonucleotide)n-3'-hydroxyl + 5'-phospho-(deoxyribonucleotide)m = (deoxyribonucleotide)n+m + AMP + beta-nicotinamide D-nucleotide.. Functionally, DNA ligase that catalyzes the formation of phosphodiester linkages between 5'-phosphoryl and 3'-hydroxyl groups in double-stranded DNA using NAD as a coenzyme and as the energy source for the reaction. It is essential for DNA replication and repair of damaged DNA. In Shewanella piezotolerans (strain WP3 / JCM 13877), this protein is DNA ligase.